Consider the following 550-residue polypeptide: MEKKMFCYQCQETAGNKGCILKGVCGKDFSTANLMDLLVFNLKGIAIIMTSMRRAGVKADYRKADKAIMESLFATITNANFDYSSIAKRVEKTFALKAELYSLAFTQGIELPENEAVTMQGKPEEYDRLALSVGILRETDEDVRSLKELTIYGLKGLAAYAEHADRLGYVDEEINAFTERALHDVTMGLLSAEELTALVLETGSFGVKVMALLDKANTETYGNPEITEVNIGVGSRPGILISGHDLKDMEMLLEQTEGTGIDVYTHGEMLPANYYPKFKKYNHFFGNYGNAWWKQREEFETFNGPILFTTNCIVPPKANASYKDRVFTTNATGYPGFKYIESDQHGRKDFSEIIALAKTCQPPTEIESGTIIGGFAHHQVLSIADKVVEAVSSGAIRKFVVMSGCDGRQSGRNYYTEFAEALPSDTVILTSGCAKFRYNKLQLGDIGGIPRVLDAGQCNDSYSLAVIALKLKEVMGLDDINKLPIVYNIAWYEQKAVIVLLALLSLGVKNIHVGPTLPAFLSPNVAKVLIENFGIAGIGTVEEDIRTLIA.

[4Fe-4S] cluster is bound by residues Cys-7, Cys-10, Cys-19, and Cys-25. 8 residues coordinate hybrid [4Fe-2O-2S] cluster: His-244, Glu-268, Cys-312, Cys-405, Cys-433, Cys-458, Glu-493, and Lys-495. A Cysteine persulfide modification is found at Cys-405.

The protein belongs to the HCP family. [4Fe-4S] cluster is required as a cofactor. Hybrid [4Fe-2O-2S] cluster serves as cofactor.

Its subcellular location is the cytoplasm. The catalysed reaction is A + NH4(+) + H2O = hydroxylamine + AH2 + H(+). In terms of biological role, catalyzes the reduction of hydroxylamine to form NH(3) and H(2)O. The chain is Hydroxylamine reductase from Porphyromonas gingivalis (strain ATCC BAA-308 / W83).